The sequence spans 136 residues: Histone H3 (136 aa).

The interval 1–42 (MARTKQTARKSTGGKAPRKQIAAKAARKAAPSTGGVKKPHRY) is disordered. K5 is subject to N6,N6,N6-trimethyllysine; alternate. An N6,N6-dimethyllysine; alternate modification is found at K5. Residues K5 and K10 each carry the N6-methyllysine; alternate modification. K10 is modified (N6-acetyllysine; alternate). A Phosphoserine modification is found at S11. At K15 the chain carries N6,N6-dimethyllysine; alternate. K15, K19, K24, K28, and K37 each carry N6-acetyllysine; alternate. Residues K19, K24, K28, and K37 each carry the N6-methyllysine; alternate modification. Low complexity predominate over residues 19–31 (KQIAAKAARKAAP). An N6,N6,N6-trimethyllysine; alternate mark is found at K28 and K37. Residues K28 and K37 each carry the N6,N6-dimethyllysine; alternate modification. Residues K57 and K65 each carry the N6-acetyllysine modification. K80 is subject to N6,N6,N6-trimethyllysine; alternate. K80 bears the N6,N6-dimethyllysine; alternate mark. K80 carries the post-translational modification N6-methyllysine; alternate.

This sequence belongs to the histone H3 family. The nucleosome is a histone octamer containing two molecules each of H2A, H2B, H3 and H4 assembled in one H3-H4 heterotetramer and two H2A-H2B heterodimers. The octamer wraps approximately 147 bp of DNA. Phosphorylated to form H3S10ph. H3S10ph promotes subsequent H3K14ac formation and is required for transcriptional activation through TBP recruitment to the promoters. Post-translationally, mono-, di- and trimethylated by the COMPASS complex to form H3K4me1/2/3. H3K4me activates gene expression by regulating transcription elongation and plays a role in telomere length maintenance. H3K4me enrichment correlates with transcription levels, and occurs in a 5' to 3' gradient with H3K4me3 enrichment at the 5'-end of genes, shifting to H3K4me2 and then H3K4me1. Methylated by SET2 to form H3K36me. H3K36me represses gene expression. Methylated by DOT1 to form H3K79me. H3K79me is required for association of SIR proteins with telomeric regions and for telomeric silencing. The COMPASS-mediated formation of H3K4me2/3 and the DOT1-mediated formation of H3K79me require H2BK123ub1. In terms of processing, acetylation of histone H3 leads to transcriptional activation. H3K14ac formation by GCN5 is promoted by H3S10ph. H3K14ac can also be formed by ESA1. H3K56ac formation occurs predominantly in newly synthesized H3 molecules during G1, S and G2/M of the cell cycle and may be involved in DNA repair.

It is found in the nucleus. The protein resides in the chromosome. In terms of biological role, core component of nucleosome. Nucleosomes wrap and compact DNA into chromatin, limiting DNA accessibility to the cellular machineries which require DNA as a template. Histones thereby play a central role in transcription regulation, DNA repair, DNA replication and chromosomal stability. DNA accessibility is regulated via a complex set of post-translational modifications of histones, also called histone code, and nucleosome remodeling. In Coccidioides immitis (strain RS) (Valley fever fungus), this protein is Histone H3 (HHT1).